Consider the following 156-residue polypeptide: Small ribosomal subunit protein uS7 (156 aa).

The protein belongs to the universal ribosomal protein uS7 family. Part of the 30S ribosomal subunit. Contacts proteins S9 and S11.

One of the primary rRNA binding proteins, it binds directly to 16S rRNA where it nucleates assembly of the head domain of the 30S subunit. Is located at the subunit interface close to the decoding center, probably blocks exit of the E-site tRNA. This is Small ribosomal subunit protein uS7 from Photorhabdus laumondii subsp. laumondii (strain DSM 15139 / CIP 105565 / TT01) (Photorhabdus luminescens subsp. laumondii).